The sequence spans 665 residues: MARSTLSKPLKNKVNPRGPLIPLILLMLRGVSTASPGSSPHQVYNITWEVTNGDRETVWATSGNHPLWTWWPDLTPDLCMLAHHGPSYWGLEYQSPFSSPPGPPCCSGGSSPGCSRDCEEPLTSLTPRCNTAWNRLKLDQTTHKSNEGFYVCPGPHRPRESKSCGGPDSFYCAYWGCETTGRAYWKPSSSWDFITVNNNLTSDQAVQVCKDNKWCNPLVIRFTDAGRRVTSWTTGHYWGLRLYVSGQDPGLTFGIRLRYQNLGPRVPIGPNPVLADQQPLSKPKPVKSPSVTKPPSGTPLSPTQLPPAGTENRLLNLVDGAYQALNLTSPDKTQECWLCLVAGPPYYEGVAVLGTYSNHTSAPANCSVASQHKLTLSEVTGQGLCIGAVPKTHQALCNTTQTSSRGSYYLVAPTGTMWACSTGLTPCISTTILNLTTDYCVLVELWPRVTYHSPSYVYGLFERSNRHKREPVSLTLALLLGGLTMGGIAAGIGTGTTALMATQQFQQLQAAVQDDLREVEKSISNLEKSLTSLSEVVLQNRRGLDLLFLKEGGLCAALKEECCFYADHTGLVRDSMAKLRERLNQRQKLFESTQGWFEGLFNRSPWFTTLISTIMGPLIVLLMILLFGPCILNRLVQFVKDRISVVQALVLTQQYHQLKPIEYEP.

Positions 1–33 are cleaved as a signal peptide; the sequence is MARSTLSKPLKNKVNPRGPLIPLILLMLRGVST. Residues 34–267 form a receptor-binding domain (RBD) region; that stretch reads ASPGSSPHQV…RYQNLGPRVP (234 aa). Over 34–610 the chain is Extracellular; sequence ASPGSSPHQV…FNRSPWFTTL (577 aa). Asn-45 carries an N-linked (GlcNAc...) asparagine; by host glycan. Cystine bridges form between Cys-79–Cys-129, Cys-105–Cys-118, Cys-106–Cys-114, Cys-152–Cys-172, and Cys-164–Cys-177. Asp-117 serves as a coordination point for Zn(2+). N-linked (GlcNAc...) asparagine; by host glycosylation occurs at Asn-199. An intrachain disulfide couples Cys-209 to Cys-215. The segment at 268–309 is disordered; sequence IGPNPVLADQQPLSKPKPVKSPSVTKPPSGTPLSPTQLPPAG. Positions 281 to 299 are enriched in low complexity; that stretch reads SKPKPVKSPSVTKPPSGTP. N-linked (GlcNAc...) asparagine; by host glycosylation occurs at Asn-326. 6 cysteine pairs are disulfide-bonded: Cys-336–Cys-339, Cys-336–Cys-563, Cys-366–Cys-420, Cys-385–Cys-397, Cys-427–Cys-440, and Cys-555–Cys-562. A CXXC motif is present at residues 336 to 339; sequence CWLC. N-linked (GlcNAc...) asparagine; by host glycans are attached at residues Asn-358 and Asn-365. 2 N-linked (GlcNAc...) asparagine; by host glycosylation sites follow: Asn-398 and Asn-434. Residues 472 to 492 are fusion peptide; it reads VSLTLALLLGGLTMGGIAAGI. Residues 500-537 adopt a coiled-coil conformation; sequence MATQQFQQLQAAVQDDLREVEKSISNLEKSLTSLSEVV. The immunosuppression stretch occupies residues 538–554; the sequence is LQNRRGLDLLFLKEGGL. The CX6CC motif lies at 555-563; it reads CAALKEECC. A helical membrane pass occupies residues 611-631; it reads ISTIMGPLIVLLMILLFGPCI. Cys-630 carries S-palmitoyl cysteine; by host lipidation. At 632–665 the chain is on the cytoplasmic side; that stretch reads LNRLVQFVKDRISVVQALVLTQQYHQLKPIEYEP. Positions 655–658 match the YXXL motif; contains endocytosis signal motif; sequence YHQL.

The mature envelope protein (Env) consists of a trimer of SU-TM heterodimers attached by a labile interchain disulfide bond. The activated Env consists of SU monomers and TM trimers. Specific enzymatic cleavages in vivo yield mature proteins. Envelope glycoproteins are synthesized as an inactive precursor that is N-glycosylated and processed likely by host cell furin or by a furin-like protease in the Golgi to yield the mature SU and TM proteins. The cleavage site between SU and TM requires the minimal sequence [KR]-X-[KR]-R. The R-peptide is released from the C-terminus of the cytoplasmic tail of the TM protein upon particle formation as a result of proteolytic cleavage by the viral protease. Cleavage of this peptide is required for TM to become fusogenic. Post-translationally, the CXXC motif is highly conserved across a broad range of retroviral envelope proteins. It is thought to participate in the formation of a labile disulfide bond possibly with the CX6CC motif present in the transmembrane protein. Isomerization of the intersubunit disulfide bond to an SU intrachain disulfide bond is thought to occur upon receptor recognition in order to allow membrane fusion. In terms of processing, the transmembrane protein is palmitoylated. The R-peptide is palmitoylated.

The protein localises to the virion membrane. It is found in the host cell membrane. The surface protein (SU) attaches the virus to the host cell by binding to its receptor. Interaction with HECT ubiquitin ligases activates a thiol in a CXXC motif of the C-terminal domain, where the other Cys residue participates in the formation of the intersubunit disulfide. The activated thiol will attack the disulfide and cause its isomerization into a disulfide isomer within the motif. This leads to SU displacement and TM refolding, and is thought to activate its fusogenic potential by unmasking its fusion peptide. Fusion occurs at the host cell plasma membrane. Its function is as follows. The transmembrane protein (TM) acts as a class I viral fusion protein. Under the current model, the protein has at least 3 conformational states: pre-fusion native state, pre-hairpin intermediate state, and post-fusion hairpin state. During viral and target cell membrane fusion, the coiled coil regions (heptad repeats) assume a trimer-of-hairpins structure, positioning the fusion peptide in close proximity to the C-terminal region of the ectodomain. The formation of this structure appears to drive apposition and subsequent fusion of viral and target cell membranes. Membranes fusion leads to delivery of the nucleocapsid into the cytoplasm. This is Envelope glycoprotein (env) from Mus musculus (Mouse).